Consider the following 134-residue polypeptide: Protein Turandot E (134 aa).

A signal peptide spans 1–38 (MSNTRTVHSSTSISKMNSALQISCLLVVLGCLLGSGHC).

The protein belongs to the Turandot family.

It is found in the secreted. A humoral factor that may play a role in stress tolerance. The polypeptide is Protein Turandot E (Drosophila melanogaster (Fruit fly)).